Here is a 368-residue protein sequence, read N- to C-terminus: Alanine racemase (368 aa).

K40 functions as the Proton acceptor; specific for D-alanine in the catalytic mechanism. K40 is subject to N6-(pyridoxal phosphate)lysine. Position 134 (R134) interacts with substrate. Y263 serves as the catalytic Proton acceptor; specific for L-alanine. M310 lines the substrate pocket.

It belongs to the alanine racemase family. Pyridoxal 5'-phosphate is required as a cofactor.

It carries out the reaction L-alanine = D-alanine. The protein operates within amino-acid biosynthesis; D-alanine biosynthesis; D-alanine from L-alanine: step 1/1. Catalyzes the interconversion of L-alanine and D-alanine. May also act on other amino acids. The sequence is that of Alanine racemase (alr) from Listeria innocua serovar 6a (strain ATCC BAA-680 / CLIP 11262).